The primary structure comprises 424 residues: Probable threonylcarbamoyladenosine tRNA methylthiotransferase (424 aa).

In terms of domain architecture, MTTase N-terminal spans 4-115 (IRVYIETFGC…APQAVRAASN (112 aa)). The [4Fe-4S] cluster site is built by Cys-13, Cys-48, Cys-79, Cys-150, Cys-154, and Cys-157. The region spanning 136–365 (RSNPLIHIIP…EELKMRITEE (230 aa)) is the Radical SAM core domain. Positions 368 to 424 (RRLVGSFQEILVVERGRKGGFIGRTGSYIPVVTETGEPGSFRRVRIRDATGTYLLAD) constitute a TRAM domain.

It belongs to the methylthiotransferase family. CDKAL1 subfamily. Requires [4Fe-4S] cluster as cofactor.

It carries out the reaction N(6)-L-threonylcarbamoyladenosine(37) in tRNA + (sulfur carrier)-SH + AH2 + 2 S-adenosyl-L-methionine = 2-methylsulfanyl-N(6)-L-threonylcarbamoyladenosine(37) in tRNA + (sulfur carrier)-H + 5'-deoxyadenosine + L-methionine + A + S-adenosyl-L-homocysteine + 2 H(+). Catalyzes the methylthiolation of N6-threonylcarbamoyladenosine (t(6)A), leading to the formation of 2-methylthio-N6-threonylcarbamoyladenosine (ms(2)t(6)A) at position 37 in tRNAs that read codons beginning with adenine. This Methanothermobacter thermautotrophicus (strain ATCC 29096 / DSM 1053 / JCM 10044 / NBRC 100330 / Delta H) (Methanobacterium thermoautotrophicum) protein is Probable threonylcarbamoyladenosine tRNA methylthiotransferase.